We begin with the raw amino-acid sequence, 686 residues long: MAEELLLERCDLEIQANGRDHHTADLCQEKLVLRRGQRFRLTLYFEGRGYEASVDSLTFGAVTGPDPSEEAGTKARFSLSDNVEEGSWSASVLDQQDNVLSLQLCTPANAPIGLYRLSLEASTGYQGSSFVLGHFILLYNAWCPADDVYLDSEEERREYVLTQQGFIYQGSVKFIKSVPWNFGQFEDGILDTCLMLLDMNPKFLKNRSRDCSRRSSPIYVGRVVSAMVNCNDDQGVLLGRWDNNYGDGISPMAWIGSVDILRRWKEHGCQQVKYGQCWVFAAVACTVLRCLGIPTRVVTNYNSAHDQNSNLLIEYFRNEFGELESNKSEMIWNFHCWVESWMTRPDLQPGYEGWQAIDPTPQEKSEGTYCCGPVSVRAIKEGDLSTKYDAPFVFAEVNADVVDWIRQEDGSVLKSINRSLVVGQKISTKSVGRDDREDITHTYKYPEGSPEEREVFTKANHLNKLAEKEETGVAMRIRVGDSMSMGNDFDVFAHIGNDTSETRECRLLLCARTVSYNGVLGPECGTEDINLTLDPYSENSIPLRILYEKYSGCLTESNLIKVRGLLIEPAANSYLLAERDLYLENPEIKIRVLGEPKQNRKLVAEVSLKNPLSDPLYDCIFTVEGAGLTKEQKSVEVSDPVPAGDLVKARVDLFPTDIGLHKLVVNFQCDKLKSVKGYRNVIIGPA.

An N-acetylalanine modification is found at alanine 2. Cystine bridges form between cysteine 230-cysteine 370 and cysteine 370-cysteine 371. Catalysis depends on residues cysteine 277, histidine 335, and aspartate 358. Residues asparagine 398, aspartate 400, glutamate 437, glutamate 447, and glutamate 452 each contribute to the Ca(2+) site. An N6-acetyllysine modification is found at lysine 468. 476–483 (RIRVGDSM) provides a ligand contact to GTP. Residue glutamate 538 participates in Ca(2+) binding. Residue 579 to 582 (RDLY) coordinates GTP. An Isoglutamyl lysine isopeptide (Gln-Lys) (interchain with K-?) cross-link involves residue glutamine 632.

It belongs to the transglutaminase superfamily. Transglutaminase family. Monomer. Interacts with phospholipase C; promoting alpha-1 adrenergic receptor signaling. Interacts with PLCD1. The cofactor is Ca(2+). In terms of processing, disulfide bond formation inactivates the calcium-dependent acyltransferase activity. Cys-370 can form disulfide bonds with both Cys-230 and Cys-371: formation of a disulfide bond between Cys-230 and Cys-370 facilitates formation of the disulfide between Cys-370 and Cys-371, which promotes inactivation of the acyltransferase activity. May also form interchain disulfids between Cys-230 and Cys-370. Ca(2+) protects against disulfide bond formation and inactivation. Auto-transglutaminated: Forms covalent cross-links mediated by transglutaminase between Gln-632 and the epsilon-amino group of a lysine residue of itself or HMGB1, forming homopolymers and heteropolymers, respectively. Post-translationally, S-nitrosylated, leading to inactivation of the acyltransferase activity.

It localises to the cytoplasm. The protein localises to the cytosol. Its subcellular location is the nucleus. The protein resides in the chromosome. It is found in the secreted. It localises to the extracellular space. The protein localises to the extracellular matrix. Its subcellular location is the cell membrane. The protein resides in the mitochondrion. The catalysed reaction is L-glutaminyl-[protein] + L-lysyl-[protein] = [protein]-L-lysyl-N(6)-5-L-glutamyl-[protein] + NH4(+). It carries out the reaction L-glutaminyl-[protein] + serotonin = 5-serotonyl-L-glutamyl-[protein] + NH4(+). The enzyme catalyses L-glutaminyl-[protein] + dopamine = 5-dopaminyl-L-glutamyl-[protein] + NH4(+). It catalyses the reaction L-glutaminyl-[protein] + histamine = 5-histaminyl-L-glutamyl-[protein] + NH4(+). The catalysed reaction is L-glutaminyl-[protein] + (R)-noradrenaline = 5-(R)-noradrenalinyl-L-glutamyl-[protein] + NH4(+). It carries out the reaction L-glutaminyl-[protein] + H2O = L-glutamyl-[protein] + NH4(+). Acyltransferase activity is regulated by the binding of GTP and Ca(2+): inactivated by GTP, which stabilizes its closed structure, thereby obstructing the accessibility of substrates to the active sites. In contrast, Ca(2+) acts as a cofactor by inducing conformational change to the active open form. In absence of Ca(2+), Mg(2+) may bind Ca(2+)-binding sites, promoting GTP-binding and subsequent inhibition of the acyltransferase activity. Extracellularly reduced and activated by CLIC3. Functionally, calcium-dependent acyltransferase that catalyzes the formation of covalent bonds between peptide-bound glutamine and various primary amines, such as gamma-amino group of peptide-bound lysine, or mono- and polyamines, thereby producing cross-linked or aminated proteins, respectively. Involved in many biological processes, such as bone development, angiogenesis, wound healing, cellular differentiation, chromatin modification and apoptosis. Acts as a protein-glutamine gamma-glutamyltransferase by mediating the cross-linking of proteins, such as ACO2, HSPB6, FN1, HMGB1, RAP1GDS1, SLC25A4/ANT1, SPP1 and WDR54. Under physiological conditions, the protein cross-linking activity is inhibited by GTP; inhibition is relieved by Ca(2+) in response to various stresses. When secreted, catalyzes cross-linking of proteins of the extracellular matrix, such as FN1 and SPP1 resulting in the formation of scaffolds. Plays a key role during apoptosis, both by (1) promoting the cross-linking of cytoskeletal proteins resulting in condensation of the cytoplasm, and by (2) mediating cross-linking proteins of the extracellular matrix, resulting in the irreversible formation of scaffolds that stabilize the integrity of the dying cells before their clearance by phagocytosis, thereby preventing the leakage of harmful intracellular components. In addition to protein cross-linking, can use different monoamine substrates to catalyze a vast array of protein post-translational modifications: mediates aminylation of serotonin, dopamine, noradrenaline or histamine into glutamine residues of target proteins to generate protein serotonylation, dopaminylation, noradrenalinylation or histaminylation, respectively. Mediates protein serotonylation of small GTPases during activation and aggregation of platelets, leading to constitutive activation of these GTPases. Plays a key role in chromatin organization by mediating serotonylation and dopaminylation of histone H3. Catalyzes serotonylation of 'Gln-5' of histone H3 (H3Q5ser) during serotonergic neuron differentiation, thereby facilitating transcription. Acts as a mediator of neurotransmission-independent role of nuclear dopamine in ventral tegmental area (VTA) neurons: catalyzes dopaminylation of 'Gln-5' of histone H3 (H3Q5dop), thereby regulating relapse-related transcriptional plasticity in the reward system. Regulates vein remodeling by mediating serotonylation and subsequent inactivation of ATP2A2/SERCA2. Also acts as a protein deamidase by mediating the side chain deamidation of specific glutamine residues of proteins to glutamate. Catalyzes specific deamidation of protein gliadin, a component of wheat gluten in the diet. May also act as an isopeptidase cleaving the previously formed cross-links. Also able to participate in signaling pathways independently of its acyltransferase activity: acts as a signal transducer in alpha-1 adrenergic receptor-mediated stimulation of phospholipase C-delta (PLCD) activity and is required for coupling alpha-1 adrenergic agonists to the stimulation of phosphoinositide lipid metabolism. This Mus musculus (Mouse) protein is Protein-glutamine gamma-glutamyltransferase 2.